A 722-amino-acid chain; its full sequence is Probable cation-transporting ATPase HI_0290 (722 aa).

Positions 9–75 (KKISIQIGGM…IIHKTGFSAH (67 aa)) constitute an HMA domain. A metal cation is bound by residues Cys20 and Cys23. 6 helical membrane-spanning segments follow: residues 94 to 114 (LIVL…MIGG), 118 to 138 (LMLP…WLAI), 157 to 177 (VLVS…LFYH), 180 to 200 (HAMG…VSLG), 340 to 360 (VFVP…YILT), and 373 to 393 (VLVI…IMVG). Residue Asp422 is the 4-aspartylphosphate intermediate of the active site. Transmembrane regions (helical) follow at residues 523-543 (IWQI…GAFA), 608-628 (LGHI…LASA), 675-695 (LFFA…GFLS), and 697-717 (IIAG…ALRL). Asp617 and Asp621 together coordinate Mg(2+).

This sequence belongs to the cation transport ATPase (P-type) (TC 3.A.3) family. Type IB subfamily.

It localises to the cell membrane. It carries out the reaction ATP + H2O = ADP + phosphate + H(+). This Haemophilus influenzae (strain ATCC 51907 / DSM 11121 / KW20 / Rd) protein is Probable cation-transporting ATPase HI_0290.